The chain runs to 447 residues: MTTILKHLPVGQRIGIAFSGGLDTSAALLWMRQKGAVPYAYTANLGQPDEEDYDAIPRRAMEYGAENARLIDCRKQLVAEGIAAIQCGAFHNTTGGLTYFNTTPLGRAVTGTMLVAAMKEDGVNIWGDGSTYKGNDIERFYRYGLLTNAELQIYKPWLDTDFIDELGGRHEMSEFMIACGFDYKMSVEKAYSTDSNMLGATHEAKDLEYLNSSVKIVNPIMGVKFWDESVKIPAEEVTVRFEQGHPVALNGKTFSDDVEMMLEANRIGGRHGLGMSDQIENRIIEAKSRGIYEAPGMALLHIAYERLLTGIHNEDTIEQYHAHGRQLGRLLYQGRWFDSQALMLRDSLQRWVASQITGEVTLELRHGNDYSILNTVSENLTYKPERLTMEKGDSVFSPDDRIGQLTMRNLDITDTREKLFGYAKTGLLSSSAASGVPQMENLENKGQ.

ATP contacts are provided by residues 17–25 and Ala43; that span reads AFSGGLDTS. Tyr99 serves as a coordination point for L-citrulline. The ATP site is built by Gly129 and Thr131. 3 residues coordinate L-aspartate: Thr131, Asn135, and Asp136. Residue Asn135 participates in L-citrulline binding. Asp136 provides a ligand contact to ATP. Positions 139 and 192 each coordinate L-citrulline. An ATP-binding site is contributed by Asp194. Thr201, Glu203, and Glu280 together coordinate L-citrulline.

It belongs to the argininosuccinate synthase family. Type 2 subfamily. As to quaternary structure, homotetramer.

It is found in the cytoplasm. The catalysed reaction is L-citrulline + L-aspartate + ATP = 2-(N(omega)-L-arginino)succinate + AMP + diphosphate + H(+). The protein operates within amino-acid biosynthesis; L-arginine biosynthesis; L-arginine from L-ornithine and carbamoyl phosphate: step 2/3. In Shigella dysenteriae serotype 1 (strain Sd197), this protein is Argininosuccinate synthase.